Reading from the N-terminus, the 596-residue chain is Adenine deaminase (596 aa).

This sequence belongs to the metallo-dependent hydrolases superfamily. Adenine deaminase family. It depends on Mn(2+) as a cofactor.

The catalysed reaction is adenine + H2O + H(+) = hypoxanthine + NH4(+). This is Adenine deaminase from Moorella thermoacetica (strain ATCC 39073 / JCM 9320).